The primary structure comprises 288 residues: HTH-type transcriptional regulator CzcR (288 aa).

The HTH lysR-type domain maps to 1–58 (MELRDLQIFQSVADQGSVSSAAKELNYVQSNVTTRIKQLENELKTPLFYRHKRGMTLT). The H-T-H motif DNA-binding region spans 18–37 (VSSAAKELNYVQSNVTTRIK).

It belongs to the LysR transcriptional regulatory family.

The polypeptide is HTH-type transcriptional regulator CzcR (czcR) (Bacillus thuringiensis subsp. konkukian (strain 97-27)).